The following is a 371-amino-acid chain: Bifunctional enzyme IspD/IspF (371 aa).

Residues 1 to 212 (MLDISLIMLG…CLIPPSNEHF (212 aa)) are 2-C-methyl-D-erythritol 4-phosphate cytidylyltransferase. The tract at residues 212–371 (FTGIGFDAHE…ANLKYYDWTK (160 aa)) is 2-C-methyl-D-erythritol 2,4-cyclodiphosphate synthase. The a divalent metal cation site is built by Asp-218 and His-220. 4-CDP-2-C-methyl-D-erythritol 2-phosphate is bound by residues 218 to 220 (DAH) and 244 to 245 (HS). His-252 contributes to the a divalent metal cation binding site. 4-CDP-2-C-methyl-D-erythritol 2-phosphate is bound by residues 266–268 (DIG), 271–275 (FPDTD), 342–345 (TTTE), Phe-349, and Arg-352.

In the N-terminal section; belongs to the IspD/TarI cytidylyltransferase family. IspD subfamily. The protein in the C-terminal section; belongs to the IspF family. The cofactor is a divalent metal cation.

It catalyses the reaction 2-C-methyl-D-erythritol 4-phosphate + CTP + H(+) = 4-CDP-2-C-methyl-D-erythritol + diphosphate. The catalysed reaction is 4-CDP-2-C-methyl-D-erythritol 2-phosphate = 2-C-methyl-D-erythritol 2,4-cyclic diphosphate + CMP. It functions in the pathway isoprenoid biosynthesis; isopentenyl diphosphate biosynthesis via DXP pathway; isopentenyl diphosphate from 1-deoxy-D-xylulose 5-phosphate: step 2/6. It participates in isoprenoid biosynthesis; isopentenyl diphosphate biosynthesis via DXP pathway; isopentenyl diphosphate from 1-deoxy-D-xylulose 5-phosphate: step 4/6. Bifunctional enzyme that catalyzes the formation of 4-diphosphocytidyl-2-C-methyl-D-erythritol from CTP and 2-C-methyl-D-erythritol 4-phosphate (MEP) (IspD), and catalyzes the conversion of 4-diphosphocytidyl-2-C-methyl-D-erythritol 2-phosphate (CDP-ME2P) to 2-C-methyl-D-erythritol 2,4-cyclodiphosphate (ME-CPP) with a corresponding release of cytidine 5-monophosphate (CMP) (IspF). This is Bifunctional enzyme IspD/IspF from Campylobacter curvus (strain 525.92).